A 468-amino-acid chain; its full sequence is Serine/threonine-protein phosphatase 2A 55 kDa regulatory subunit B beta isoform (468 aa).

WD repeat units follow at residues 47–86 (SSADIISTVEFNNTGELLATGDKGGRVVIFQREQENKNQP), 112–153 (EIEE…KRPE), 196–234 (AHTYHINSISVNSDYETYMSADDLRINLWNLEITNRSFN), 245–285 (ELTE…LCDK), 304–342 (EIISSISDVKFNHSGRYIMTRDYLTVKVWDLNMENRPIE), 359–400 (ENDC…DVTL), and 435–468 (DFSKKILHTAWHPSENIIAVAATNNLYIFQDKVN).

This sequence belongs to the phosphatase 2A regulatory subunit B family. PP2A consists of a common heterodimeric core enzyme, composed of a 36 kDa catalytic subunit (subunit C) and a 65 kDa constant regulatory subunit (PR65 or subunit A), that associates with a variety of regulatory subunits.

The protein resides in the cytoplasm. It localises to the cytoskeleton. Its subcellular location is the membrane. Functionally, the B regulatory subunit might modulate substrate selectivity and catalytic activity, and might also direct the localization of the catalytic enzyme to a particular subcellular compartment. Negatively controls the initiation of oocyte maturation. This Xenopus laevis (African clawed frog) protein is Serine/threonine-protein phosphatase 2A 55 kDa regulatory subunit B beta isoform (ppp2r2b).